We begin with the raw amino-acid sequence, 291 residues long: Cilia- and flagella-associated protein 298 (291 aa).

Belongs to the CFAP298 family.

The sequence is that of Cilia- and flagella-associated protein 298 from Drosophila melanogaster (Fruit fly).